The primary structure comprises 160 residues: MSTLKKPNLSDPKLRAKLSKGMGHNYYGEPAWPNDLLYIFPVVILGTIACVVGLAVLDPAFLGDKANPFATPLEILPEWYLYPVFQILRVVPNKLLGIALQTLIPLGLILIPFIENVNKFSNPFRRPVAMAFFLFGTALTIYLGIGACLPIDKSLTLGLF.

The next 3 membrane-spanning stretches (helical) occupy residues 36–56, 95–115, and 131–151; these read LLYI…GLAV, LLGI…PFIE, and AFFL…CLPI.

It belongs to the cytochrome b family. PetD subfamily. As to quaternary structure, the 4 large subunits of the cytochrome b6-f complex are cytochrome b6, subunit IV (17 kDa polypeptide, PetD), cytochrome f and the Rieske protein, while the 4 small subunits are PetG, PetL, PetM and PetN. The complex functions as a dimer.

The protein resides in the cellular thylakoid membrane. In terms of biological role, component of the cytochrome b6-f complex, which mediates electron transfer between photosystem II (PSII) and photosystem I (PSI), cyclic electron flow around PSI, and state transitions. This chain is Cytochrome b6-f complex subunit 4, found in Prochlorococcus marinus (strain SARG / CCMP1375 / SS120).